Here is a 77-residue protein sequence, read N- to C-terminus: Large ribosomal subunit protein bL31 (77 aa).

It belongs to the bacterial ribosomal protein bL31 family. Type A subfamily. In terms of assembly, part of the 50S ribosomal subunit.

Functionally, binds the 23S rRNA. The sequence is that of Large ribosomal subunit protein bL31 from Paramagnetospirillum magneticum (strain ATCC 700264 / AMB-1) (Magnetospirillum magneticum).